A 252-amino-acid chain; its full sequence is Triosephosphate isomerase (252 aa).

Residue 10–12 coordinates substrate; sequence NWK. The active-site Electrophile is the H96. Residue E168 is the Proton acceptor of the active site. Substrate is bound by residues G174, S213, and 234 to 235; that span reads GG.

It belongs to the triosephosphate isomerase family. In terms of assembly, homodimer.

The protein localises to the cytoplasm. The enzyme catalyses D-glyceraldehyde 3-phosphate = dihydroxyacetone phosphate. The protein operates within carbohydrate biosynthesis; gluconeogenesis. Its pathway is carbohydrate degradation; glycolysis; D-glyceraldehyde 3-phosphate from glycerone phosphate: step 1/1. Its function is as follows. Involved in the gluconeogenesis. Catalyzes stereospecifically the conversion of dihydroxyacetone phosphate (DHAP) to D-glyceraldehyde-3-phosphate (G3P). This is Triosephosphate isomerase from Nitrosomonas europaea (strain ATCC 19718 / CIP 103999 / KCTC 2705 / NBRC 14298).